Consider the following 158-residue polypeptide: Transcription elongation factor GreA (158 aa).

Residues 1–67 adopt a coiled-coil conformation; the sequence is MSNNIPLTKE…FIEGRIQELQ (67 aa).

It belongs to the GreA/GreB family.

Necessary for efficient RNA polymerase transcription elongation past template-encoded arresting sites. The arresting sites in DNA have the property of trapping a certain fraction of elongating RNA polymerases that pass through, resulting in locked ternary complexes. Cleavage of the nascent transcript by cleavage factors such as GreA or GreB allows the resumption of elongation from the new 3'terminus. GreA releases sequences of 2 to 3 nucleotides. This chain is Transcription elongation factor GreA, found in Trichlorobacter lovleyi (strain ATCC BAA-1151 / DSM 17278 / SZ) (Geobacter lovleyi).